Here is a 132-residue protein sequence, read N- to C-terminus: Ribosome-binding factor A (132 aa).

This sequence belongs to the RbfA family. Monomer. Binds 30S ribosomal subunits, but not 50S ribosomal subunits or 70S ribosomes.

It localises to the cytoplasm. Its function is as follows. One of several proteins that assist in the late maturation steps of the functional core of the 30S ribosomal subunit. Associates with free 30S ribosomal subunits (but not with 30S subunits that are part of 70S ribosomes or polysomes). Required for efficient processing of 16S rRNA. May interact with the 5'-terminal helix region of 16S rRNA. The chain is Ribosome-binding factor A from Rhizorhabdus wittichii (strain DSM 6014 / CCUG 31198 / JCM 15750 / NBRC 105917 / EY 4224 / RW1) (Sphingomonas wittichii).